A 209-amino-acid chain; its full sequence is Casparian strip membrane protein 1 (209 aa).

The tract at residues 1-35 is disordered; it reads MKTGESTAIDIAPETNNSGPIGKKKSTTPLLAAPV. Residues 1–46 lie on the Cytoplasmic side of the membrane; sequence MKTGESTAIDIAPETNNSGPIGKKKSTTPLLAAPVPDRGTHRMKRG. A helical membrane pass occupies residues 47–67; that stretch reads LAIFDFVLRIGVLASALAAAA. Residues 68-96 are Extracellular-facing; the sequence is AMGTSEQTLPFFTQFFQFEASYDDLPTFQ. A helical transmembrane segment spans residues 97-117; that stretch reads FFVVAMAVVAGYVVLSIPFSI. Residues 118–129 are Cytoplasmic-facing; it reads VCIIRPHAAGPR. Residues 130 to 150 traverse the membrane as a helical segment; it reads VLLLILDSVALTLNTAAAGAA. The Extracellular segment spans residues 151–182; the sequence is AAVVSLAHSGNSSTNWLAICNQFGDFCQQASG. Residue N161 is glycosylated (N-linked (GlcNAc...) asparagine). A helical transmembrane segment spans residues 183 to 203; it reads AVVGSFAAVLLFLLLILFSAL. Residues 204-209 are Cytoplasmic-facing; sequence SLKNSH.

This sequence belongs to the Casparian strip membrane proteins (CASP) family. Homodimer and heterodimers.

It is found in the cell membrane. In terms of biological role, regulates membrane-cell wall junctions and localized cell wall deposition. Required for establishment of the Casparian strip membrane domain (CSD) and the subsequent formation of Casparian strips, a cell wall modification of the root endodermis that determines an apoplastic barrier between the intraorganismal apoplasm and the extraorganismal apoplasm and prevents lateral diffusion. The chain is Casparian strip membrane protein 1 from Cucumis melo (Muskmelon).